Here is a 315-residue protein sequence, read N- to C-terminus: Aspartate carbamoyltransferase catalytic subunit (315 aa).

Carbamoyl phosphate is bound by residues Arg-55 and Thr-56. Residue Lys-83 participates in L-aspartate binding. Residues Arg-105, His-138, and Gln-141 each coordinate carbamoyl phosphate. Residues Arg-171 and Arg-225 each contribute to the L-aspartate site. Carbamoyl phosphate contacts are provided by Gly-266 and Pro-267.

Belongs to the aspartate/ornithine carbamoyltransferase superfamily. ATCase family. Heterododecamer (2C3:3R2) of six catalytic PyrB chains organized as two trimers (C3), and six regulatory PyrI chains organized as three dimers (R2).

It catalyses the reaction carbamoyl phosphate + L-aspartate = N-carbamoyl-L-aspartate + phosphate + H(+). It functions in the pathway pyrimidine metabolism; UMP biosynthesis via de novo pathway; (S)-dihydroorotate from bicarbonate: step 2/3. Functionally, catalyzes the condensation of carbamoyl phosphate and aspartate to form carbamoyl aspartate and inorganic phosphate, the committed step in the de novo pyrimidine nucleotide biosynthesis pathway. The chain is Aspartate carbamoyltransferase catalytic subunit from Mycolicibacterium gilvum (strain PYR-GCK) (Mycobacterium gilvum (strain PYR-GCK)).